We begin with the raw amino-acid sequence, 393 residues long: Na(+)/H(+) antiporter NhaA (393 aa).

A run of 12 helical transmembrane segments spans residues A23 to F43, L58 to L78, M96 to L116, G126 to G146, V155 to F175, A178 to M198, M201 to F221, G224 to P244, V265 to L285, I298 to I318, L334 to L354, and I367 to A387.

The protein belongs to the NhaA Na(+)/H(+) (TC 2.A.33) antiporter family.

Its subcellular location is the cell inner membrane. The catalysed reaction is Na(+)(in) + 2 H(+)(out) = Na(+)(out) + 2 H(+)(in). In terms of biological role, na(+)/H(+) antiporter that extrudes sodium in exchange for external protons. The protein is Na(+)/H(+) antiporter NhaA of Brucella suis (strain ATCC 23445 / NCTC 10510).